The following is a 48-amino-acid chain: Sperm protamine P1 (48 aa).

This sequence belongs to the protamine P1 family. As to expression, testis.

The protein resides in the nucleus. Its subcellular location is the chromosome. Its function is as follows. Protamines substitute for histones in the chromatin of sperm during the haploid phase of spermatogenesis. They compact sperm DNA into a highly condensed, stable and inactive complex. The protein is Sperm protamine P1 (PRM1) of Monophyllus redmani (Greater Antillean long-tongued bat).